A 155-amino-acid polypeptide reads, in one-letter code: MDNIDEDLTPEQIAVLQKAFNSFDHQKTGSIPTEMVADILRLMGQPFDRQILDELIDEVDEDKSGRLEFEEFVQLAAKFIVEEDDEAMQKELREAFRLYDKQGNGYIPTSCLKEILKELDDQLTEQELDIMIEEIDSDGSGTVDFDEFMEMMTGE.

4 EF-hand domains span residues 11–46 (EQIAVLQKAFNSFDHQKTGSIPTEMVADILRLMGQP), 47–82 (FDRQILDELIDEVDEDKSGRLEFEEFVQLAAKFIVE), 87–122 (AMQKELREAFRLYDKQGNGYIPTSCLKEILKELDDQ), and 123–155 (LTEQELDIMIEEIDSDGSGTVDFDEFMEMMTGE). Residues aspartate 60, aspartate 62, serine 64, arginine 66, and glutamate 71 each coordinate Ca(2+). Residues aspartate 136, aspartate 138, serine 140, threonine 142, and glutamate 147 each coordinate Ca(2+).

It belongs to the troponin C family. Accumulates almost exclusively in larval muscles.

This is Troponin C, isoform 2 (TpnC47D) from Drosophila melanogaster (Fruit fly).